A 422-amino-acid chain; its full sequence is Adenylosuccinate synthetase (422 aa).

GTP-binding positions include 11 to 17 and 39 to 41; these read GDEGKGK and GHT. Catalysis depends on D12, which acts as the Proton acceptor. D12 and G39 together coordinate Mg(2+). IMP is bound by residues 12–15, 37–40, T129, R143, N219, T234, and R298; these read DEGK and NAGH. Residue H40 is the Proton donor of the active site. 294-300 contacts substrate; that stretch reads VTTGRKR. Residues R300, 326–328, and 411–413 contribute to the GTP site; these read KLD and GTG.

This sequence belongs to the adenylosuccinate synthetase family. Homodimer. Mg(2+) serves as cofactor.

The protein resides in the cytoplasm. The enzyme catalyses IMP + L-aspartate + GTP = N(6)-(1,2-dicarboxyethyl)-AMP + GDP + phosphate + 2 H(+). It participates in purine metabolism; AMP biosynthesis via de novo pathway; AMP from IMP: step 1/2. In terms of biological role, plays an important role in the de novo pathway and in the salvage pathway of purine nucleotide biosynthesis. Catalyzes the first committed step in the biosynthesis of AMP from IMP. The sequence is that of Adenylosuccinate synthetase from Talaromyces marneffei (strain ATCC 18224 / CBS 334.59 / QM 7333) (Penicillium marneffei).